The chain runs to 819 residues: Cadherin-24 (819 aa).

A signal peptide spans 1 to 19 (MWGLVRLLLAWLGGWGCMG). Positions 21–44 (LAAPARAWAGSREHPGPALLRTRR) are excised as a propeptide. The Extracellular segment spans residues 45 to 641 (SWVWNQFFVI…LSAAGLSTGA (597 aa)). Cadherin domains lie at 46 to 150 (WVWN…PPIF), 151 to 259 (PLGP…PPKF), 260 to 374 (PQSL…PPAF), 375 to 517 (TQAA…APQL), and 517 to 630 (LAEP…WPEA). N-linked (GlcNAc...) asparagine glycosylation is found at Asn-446, Asn-548, and Asn-563. Residues 642–662 (LLAIITCVGALLALVVLFVAL) form a helical membrane-spanning segment. Over 663–819 (RRQKQEALMV…LYGAKEPPAP (157 aa)) the chain is Cytoplasmic. Residues 768–800 (YEGRGSSCGSLSSLGSGSEAGGAPGPAEPLDDW) are disordered. Over residues 771–784 (RGSSCGSLSSLGSG) the composition is skewed to low complexity.

Associates with alpha-, beta- and delta-catenins.

The protein localises to the cell membrane. Cadherins are calcium-dependent cell adhesion proteins. They preferentially interact with themselves in a homophilic manner in connecting cells; cadherins may thus contribute to the sorting of heterogeneous cell types. Cadherin-24 mediate strong cell-cell adhesion. The sequence is that of Cadherin-24 (CDH24) from Homo sapiens (Human).